A 188-amino-acid polypeptide reads, in one-letter code: dCTP deaminase (188 aa).

DCTP contacts are provided by residues 111–116 (KSTYAR), 135–137 (TLE), Q156, Y170, and Q180. E137 acts as the Proton donor/acceptor in catalysis.

Belongs to the dCTP deaminase family. In terms of assembly, homotrimer.

It catalyses the reaction dCTP + H2O + H(+) = dUTP + NH4(+). The protein operates within pyrimidine metabolism; dUMP biosynthesis; dUMP from dCTP (dUTP route): step 1/2. In terms of biological role, catalyzes the deamination of dCTP to dUTP. The polypeptide is dCTP deaminase (Aromatoleum aromaticum (strain DSM 19018 / LMG 30748 / EbN1) (Azoarcus sp. (strain EbN1))).